Here is a 450-residue protein sequence, read N- to C-terminus: Bifunctional protein GlmU (450 aa).

A pyrophosphorylase region spans residues 1-228; sequence MKTALVILAA…ESETLGINSR (228 aa). UDP-N-acetyl-alpha-D-glucosamine-binding positions include 8–11, Lys22, Gln75, and 80–81; these read LAAG and GT. Asp105 is a binding site for Mg(2+). The UDP-N-acetyl-alpha-D-glucosamine site is built by Gly140, Glu154, Asn169, and Asn226. Residue Asn226 participates in Mg(2+) binding. Positions 229 to 249 are linker; it reads TELSAAEAAFQERARTNAFEN. The tract at residues 250 to 450 is N-acetyltransferase; sequence GVTLPAPGTV…AKKAKQQRGS (201 aa). The UDP-N-acetyl-alpha-D-glucosamine site is built by Arg315 and Lys333. His345 serves as the catalytic Proton acceptor. UDP-N-acetyl-alpha-D-glucosamine contacts are provided by Tyr348 and Asn359. Acetyl-CoA is bound by residues Ala362, 368–369, Ser387, Ser405, and Arg422; that span reads NY.

It in the N-terminal section; belongs to the N-acetylglucosamine-1-phosphate uridyltransferase family. In the C-terminal section; belongs to the transferase hexapeptide repeat family. As to quaternary structure, homotrimer. It depends on Mg(2+) as a cofactor.

The protein localises to the cytoplasm. It carries out the reaction alpha-D-glucosamine 1-phosphate + acetyl-CoA = N-acetyl-alpha-D-glucosamine 1-phosphate + CoA + H(+). It catalyses the reaction N-acetyl-alpha-D-glucosamine 1-phosphate + UTP + H(+) = UDP-N-acetyl-alpha-D-glucosamine + diphosphate. Its pathway is nucleotide-sugar biosynthesis; UDP-N-acetyl-alpha-D-glucosamine biosynthesis; N-acetyl-alpha-D-glucosamine 1-phosphate from alpha-D-glucosamine 6-phosphate (route II): step 2/2. It participates in nucleotide-sugar biosynthesis; UDP-N-acetyl-alpha-D-glucosamine biosynthesis; UDP-N-acetyl-alpha-D-glucosamine from N-acetyl-alpha-D-glucosamine 1-phosphate: step 1/1. The protein operates within bacterial outer membrane biogenesis; LPS lipid A biosynthesis. In terms of biological role, catalyzes the last two sequential reactions in the de novo biosynthetic pathway for UDP-N-acetylglucosamine (UDP-GlcNAc). The C-terminal domain catalyzes the transfer of acetyl group from acetyl coenzyme A to glucosamine-1-phosphate (GlcN-1-P) to produce N-acetylglucosamine-1-phosphate (GlcNAc-1-P), which is converted into UDP-GlcNAc by the transfer of uridine 5-monophosphate (from uridine 5-triphosphate), a reaction catalyzed by the N-terminal domain. The protein is Bifunctional protein GlmU of Roseobacter denitrificans (strain ATCC 33942 / OCh 114) (Erythrobacter sp. (strain OCh 114)).